We begin with the raw amino-acid sequence, 133 residues long: S-protein homolog 9 (133 aa).

Residues 1-20 (MNRLSCFLLVIGLCIGLSNA) form the signal peptide.

Belongs to the plant self-incompatibility (S1) protein family.

The protein localises to the secreted. This is S-protein homolog 9 from Arabidopsis thaliana (Mouse-ear cress).